Consider the following 144-residue polypeptide: L-fucose mutarotase (144 aa).

Histidine 22 functions as the Proton donor in the catalytic mechanism. Substrate contacts are provided by residues aspartate 30, arginine 109, and 131 to 133 (YGN).

Belongs to the RbsD / FucU family. FucU mutarotase subfamily. Homodecamer.

It is found in the cytoplasm. The enzyme catalyses alpha-L-fucose = beta-L-fucose. It participates in carbohydrate metabolism; L-fucose metabolism. Involved in the anomeric conversion of L-fucose. The sequence is that of L-fucose mutarotase from Haemophilus influenzae (strain PittEE).